The sequence spans 600 residues: Keratin, type II cuticular Hb4 (600 aa).

The interval 1–165 (MSCRSYRVSS…PNAQRVKKDE (165 aa)) is head. An IF rod domain is found at 165 to 476 (EKEQIKTLNN…RLLEGEESRL (312 aa)). Residues 166 to 200 (KEQIKTLNNKFASFIDKVRFLEQQNKLLETKWSFL) are coil 1A. Positions 201-210 (QEQKCIRSNL) are linker 1. The interval 211–311 (EPLFESYITN…YMEEIQLLQS (101 aa)) is coil 1B. The interval 312-328 (HISETSVIVKMDNSRDL) is linker 12. Residues 329–472 (NLDGIIAEVK…ATYRRLLEGE (144 aa)) form a coil 2 region. The tract at residues 473–600 (ESRLCEGVGP…STTTSCRTKY (128 aa)) is tail.

Belongs to the intermediate filament family. Heterotetramer of two type I and two type II keratins. In terms of tissue distribution, expressed in the hair follicles.

The polypeptide is Keratin, type II cuticular Hb4 (KRT84) (Homo sapiens (Human)).